The primary structure comprises 85 residues: U4-theraphotoxin-Hhn1a (85 aa).

The N-terminal stretch at 1–22 is a signal peptide; that stretch reads MKVTLISILTCAAVLVLHTTAA. The propeptide occupies 23–48; sequence EELEAESQLMEVGMPDTELAAVDEER. 3 disulfides stabilise this stretch: Cys52–Cys66, Cys56–Cys77, and Cys71–Cys82.

The protein belongs to the neurotoxin 12 (Hwtx-2) family. 02 (Hwtx-2) subfamily. Monomer. Expressed by the venom gland.

Its subcellular location is the secreted. Its function is as follows. Neurotoxin active on both insects and mammals. This is U4-theraphotoxin-Hhn1a from Cyriopagopus hainanus (Chinese bird spider).